Consider the following 79-residue polypeptide: Conotoxin Cl9.4 (79 aa).

The signal sequence occupies residues 1-23 (MNCYLILTVALLLTSAMTGTTTA). Positions 24–37 (GQLNKKGVTLREDD) are excised as a propeptide. Cystine bridges form between Cys-41–Cys-58, Cys-46–Cys-68, and Cys-48–Cys-73.

In terms of tissue distribution, expressed by the venom duct.

It localises to the secreted. The protein is Conotoxin Cl9.4 of Californiconus californicus (California cone).